The chain runs to 86 residues: Teretoxin Tsu6.16 (86 aa).

Positions 1-21 (MATSGRLLCVCLVMGLVFESL) are cleaved as a signal peptide. A propeptide spanning residues 22–46 (GYLTGREKRPAENLEASVQRRWYLN) is cleaved from the precursor.

This sequence belongs to the teretoxin M (TM) superfamily. In terms of processing, contains 3 disulfide bonds. In terms of tissue distribution, expressed by the venom duct.

Its subcellular location is the secreted. This chain is Teretoxin Tsu6.16, found in Terebra subulata (Chocolate spotted auger).